The following is a 146-amino-acid chain: Probable transporter XF_0765 (146 aa).

The next 4 membrane-spanning stretches (helical) occupy residues 9–29, 46–66, 91–111, and 116–136; these read FTVALAAGLLFGFGLALSEMI, NPSLLFVLGSALAVAFPGMAL, IVFGSAIFGTGWGLTGLCPGP, and LSTGLGPVLLFVAAMAAGMII.

The protein belongs to the TsuA/YedE (TC 9.B.102) family.

It is found in the cell inner membrane. The polypeptide is Probable transporter XF_0765 (Xylella fastidiosa (strain 9a5c)).